The following is a 253-amino-acid chain: Uridylate kinase (253 aa).

9-12 is an ATP binding site; the sequence is KLSG. G51 provides a ligand contact to UMP. ATP is bound by residues G52 and R56. UMP-binding positions include D72 and 133–140; that span reads SGNPFFTT. 3 residues coordinate ATP: T160, Y166, and D169.

It belongs to the UMP kinase family. In terms of assembly, homohexamer.

It is found in the cytoplasm. It carries out the reaction UMP + ATP = UDP + ADP. It functions in the pathway pyrimidine metabolism; CTP biosynthesis via de novo pathway; UDP from UMP (UMPK route): step 1/1. With respect to regulation, inhibited by UTP. In terms of biological role, catalyzes the reversible phosphorylation of UMP to UDP. The polypeptide is Uridylate kinase (Synechococcus sp. (strain JA-2-3B'a(2-13)) (Cyanobacteria bacterium Yellowstone B-Prime)).